The sequence spans 662 residues: DNA ligase (662 aa).

NAD(+)-binding positions include D34–D38, S83–I84, and E113. K115 (N6-AMP-lysine intermediate) is an active-site residue. NAD(+) is bound by residues R136, E172, K286, and K310. The Zn(2+) site is built by C404, C407, C422, and C427. Residues R583–N662 enclose the BRCT domain.

This sequence belongs to the NAD-dependent DNA ligase family. LigA subfamily. Requires Mg(2+) as cofactor. It depends on Mn(2+) as a cofactor.

It catalyses the reaction NAD(+) + (deoxyribonucleotide)n-3'-hydroxyl + 5'-phospho-(deoxyribonucleotide)m = (deoxyribonucleotide)n+m + AMP + beta-nicotinamide D-nucleotide.. DNA ligase that catalyzes the formation of phosphodiester linkages between 5'-phosphoryl and 3'-hydroxyl groups in double-stranded DNA using NAD as a coenzyme and as the energy source for the reaction. It is essential for DNA replication and repair of damaged DNA. The protein is DNA ligase of Chlamydia caviae (strain ATCC VR-813 / DSM 19441 / 03DC25 / GPIC) (Chlamydophila caviae).